Reading from the N-terminus, the 427-residue chain is 3-deoxy-D-manno-octulosonic acid transferase (427 aa).

A helical; Signal-anchor transmembrane segment spans residues 4-24; sequence FFYTSLLLICQPLILCFIGLL. The Proton acceptor role is filled by Glu62. Residues 270-271, 311-313, and 337-340 each bind CMP; these read PR, MGE, and NPLE.

The protein belongs to the glycosyltransferase group 1 family. Glycosyltransferase 30 subfamily.

The protein resides in the cell inner membrane. It carries out the reaction lipid IVA (E. coli) + CMP-3-deoxy-beta-D-manno-octulosonate = alpha-Kdo-(2-&gt;6)-lipid IVA (E. coli) + CMP + H(+). The protein operates within bacterial outer membrane biogenesis; LPS core biosynthesis. Functionally, involved in lipopolysaccharide (LPS) biosynthesis. Catalyzes the transfer of a single 3-deoxy-D-manno-octulosonate (Kdo) residue from CMP-Kdo to lipid IV(A), the tetraacyldisaccharide-1,4'-bisphosphate precursor of lipid A. Is strictly monofunctional, i.e. is capable of adding only a single Kdo residue to the acceptor lipid. The chain is 3-deoxy-D-manno-octulosonic acid transferase (waaA) from Haemophilus influenzae (strain ATCC 51907 / DSM 11121 / KW20 / Rd).